The chain runs to 492 residues: Fascin-2 (492 aa).

Belongs to the fascin family. Expressed in the inner ear. Abundant in the utricle.

It is found in the cytoplasm. Its subcellular location is the cytoskeleton. It localises to the cell projection. The protein localises to the stereocilium. Functionally, acts as an actin bundling protein. May play a pivotal role in photoreceptor cell-specific events, such as disk morphogenesis. Important for maintaining functional hair-cell bundles in the inner ear. May stiffen the longer stereocilia of hair-cell bundles in the inner ear enabling better force transmission to tip links. The protein is Fascin-2 (Fscn2) of Mus musculus (Mouse).